The chain runs to 351 residues: Inhibin beta C chain (351 aa).

Residues 1–18 form the signal peptide; that stretch reads MASSLLLALLFLTLATVV. Positions 19–236 are excised as a propeptide; it reads NLKTDGPCPA…EGKHRVRRRG (218 aa). N-linked (GlcNAc...) asparagine glycosylation is found at Asn110, Asn142, and Asn160. Cystine bridges form between Cys239-Cys247, Cys246-Cys316, Cys275-Cys348, and Cys279-Cys350.

This sequence belongs to the TGF-beta family. As to quaternary structure, homodimeric or heterodimeric through association with alpha and beta subunits, linked by one or more disulfide bonds. Inhibins are heterodimers of one alpha and one beta subunit. Activins are homo- or heterodimers of beta subunits only.

It localises to the secreted. Its function is as follows. Inhibins and activins inhibit and activate, respectively, the secretion of follitropin by the pituitary gland. Inhibins/activins are involved in regulating a number of diverse functions such as hypothalamic and pituitary hormone secretion, gonadal hormone secretion, germ cell development and maturation, erythroid differentiation, insulin secretion, nerve cell survival, embryonic axial development or bone growth, depending on their subunit composition. Inhibins appear to oppose the functions of activins. The protein is Inhibin beta C chain (Inhbc) of Rattus norvegicus (Rat).